Reading from the N-terminus, the 250-residue chain is Proteasome subunit alpha type-7-like (250 aa).

Residue S132 is glycosylated (O-linked (GlcNAc) serine).

The protein belongs to the peptidase T1A family. The 26S proteasome consists of a 20S proteasome core and two 19S regulatory subunits. The 20S proteasome core is a barrel-shaped complex made of 28 subunits that are arranged in four stacked rings. The two outer rings are each formed by seven alpha subunits, and the two inner rings are formed by seven beta subunits. The proteolytic activity is exerted by three beta-subunits PSMB5, PSMB6 and PSMB7. PSMA7 interacts directly with the PSMG1-PSMG2 heterodimer which promotes 20S proteasome assembly. Interacts with HIF1A. Interacts with RAB7A. Interacts with PRKN. Interacts with ABL1 and ABL2. Interacts with EMAP2. Interacts with MAVS.

The protein resides in the cytoplasm. It is found in the nucleus. Component of the 20S core proteasome complex involved in the proteolytic degradation of most intracellular proteins. This complex plays numerous essential roles within the cell by associating with different regulatory particles. Associated with two 19S regulatory particles, forms the 26S proteasome and thus participates in the ATP-dependent degradation of ubiquitinated proteins. The 26S proteasome plays a key role in the maintenance of protein homeostasis by removing misfolded or damaged proteins that could impair cellular functions, and by removing proteins whose functions are no longer required. Associated with the PA200 or PA28, the 20S proteasome mediates ubiquitin-independent protein degradation. This type of proteolysis is required in several pathways including spermatogenesis (20S-PA200 complex) or generation of a subset of MHC class I-presented antigenic peptides (20S-PA28 complex). Inhibits the transactivation function of HIF-1A under both normoxic and hypoxia-mimicking conditions. The interaction with EMAP2 increases the proteasome-mediated HIF-1A degradation under the hypoxic conditions. Plays a role in hepatitis C virus internal ribosome entry site-mediated translation. Mediates nuclear translocation of the androgen receptor (AR) and thereby enhances androgen-mediated transactivation. Promotes MAVS degradation and thereby negatively regulates MAVS-mediated innate immune response. This chain is Proteasome subunit alpha type-7-like (PSMA7L), found in Macaca fascicularis (Crab-eating macaque).